Consider the following 100-residue polypeptide: MIITIEEEVYNNLKKRAEKEEISIPAIVRKFIVSYFNLEDSTKDYKRKEPGESVIIVNGKKYFRINCKMERQNELYIKSELKKKGISVNKLLKELIIVTV.

This is an uncharacterized protein from Acidianus filamentous virus 2 (isolate Italy/Pozzuoli) (AFV-2).